We begin with the raw amino-acid sequence, 388 residues long: Protein kes1 (388 aa).

The protein belongs to the OSBP family.

Its function is as follows. Lipid transporter involved in lipid countertransport between the Golgi complex and membranes of the endoplasmic reticulum: specifically exchanges sterol with phosphatidylinositol 4-phosphate (PI4P), delivering sterol to the Golgi in exchange for PI4P, which is degraded by the SAC1 phosphatase in the endoplasmic reticulum. This is Protein kes1 (kes1) from Schizosaccharomyces pombe (strain 972 / ATCC 24843) (Fission yeast).